The sequence spans 71 residues: Large ribosomal subunit protein bL31 (71 aa).

C16, C18, C37, and C40 together coordinate Zn(2+).

It belongs to the bacterial ribosomal protein bL31 family. Type A subfamily. As to quaternary structure, part of the 50S ribosomal subunit. Zn(2+) serves as cofactor.

Functionally, binds the 23S rRNA. This Yersinia pseudotuberculosis serotype O:1b (strain IP 31758) protein is Large ribosomal subunit protein bL31.